A 303-amino-acid polypeptide reads, in one-letter code: Taste receptor type 2 member 13 (303 aa).

Over 1–7 (MESALLS) the chain is Extracellular. Residues 8 to 28 (ILTLVIIAEFVIGNLSNGFXV) form a helical membrane-spanning segment. The Cytoplasmic segment spans residues 29-55 (LINCIDWVSKRQLSSVDKILTFLAISR). The helical transmembrane segment at 56-76 (IGLIWELLVSWFLGLHYLAIF) threads the bilayer. Residues 77–85 (VSGTGLRIM) are Extracellular-facing. A helical membrane pass occupies residues 86 to 106 (IFSWVVSNHFSLWLATILSIF). Residues 107–128 (YLLKIASFSSPAFLYLKWRVNQ) are Cytoplasmic-facing. The chain crosses the membrane as a helical span at residues 129–149 (VILMILLGTLVFLFLNLIQIN). The Extracellular portion of the chain corresponds to 150–184 (IHIKDWLDRCERNTIWNFSMSGLPTFSVPVKFTMT). Asn-166 is a glycosylation site (N-linked (GlcNAc...) asparagine). Residues 185–205 (MFSLAPFTVALISFLLLIFSL) form a helical membrane-spanning segment. At 206-232 (RKHLQKMQLNYKGHREPRTKAHINALK) the chain is on the cytoplasmic side. The chain crosses the membrane as a helical span at residues 233–253 (IVISFLLLYASFFLCILISWI). Topologically, residues 254 to 261 (SELYQNTL) are extracellular. The chain crosses the membrane as a helical span at residues 262–282 (IHMFCQTIGVFYPSSHSFLLI). Topologically, residues 283 to 303 (LGNPKLRQASLLVAAKVWAKR) are cytoplasmic.

This sequence belongs to the G-protein coupled receptor T2R family.

It localises to the membrane. Functionally, receptor that may play a role in the perception of bitterness and is gustducin-linked. May play a role in sensing the chemical composition of the gastrointestinal content. The activity of this receptor may stimulate alpha gustducin, mediate PLC-beta-2 activation and lead to the gating of TRPM5. In Papio hamadryas (Hamadryas baboon), this protein is Taste receptor type 2 member 13 (TAS2R13).